A 383-amino-acid chain; its full sequence is Succinyl-diaminopimelate desuccinylase (383 aa).

Histidine 69 contacts Zn(2+). The active site involves aspartate 71. Aspartate 103 serves as a coordination point for Zn(2+). Catalysis depends on glutamate 137, which acts as the Proton acceptor. Residues glutamate 138, glutamate 166, and histidine 357 each coordinate Zn(2+).

This sequence belongs to the peptidase M20A family. DapE subfamily. As to quaternary structure, homodimer. Zn(2+) serves as cofactor. It depends on Co(2+) as a cofactor.

The enzyme catalyses N-succinyl-(2S,6S)-2,6-diaminopimelate + H2O = (2S,6S)-2,6-diaminopimelate + succinate. Its pathway is amino-acid biosynthesis; L-lysine biosynthesis via DAP pathway; LL-2,6-diaminopimelate from (S)-tetrahydrodipicolinate (succinylase route): step 3/3. Functionally, catalyzes the hydrolysis of N-succinyl-L,L-diaminopimelic acid (SDAP), forming succinate and LL-2,6-diaminopimelate (DAP), an intermediate involved in the bacterial biosynthesis of lysine and meso-diaminopimelic acid, an essential component of bacterial cell walls. This chain is Succinyl-diaminopimelate desuccinylase, found in Rickettsia typhi (strain ATCC VR-144 / Wilmington).